A 1056-amino-acid chain; its full sequence is Carbamoyl phosphate synthase large chain (1056 aa).

Residues 1-397 (MPKKSHIKKV…AFKKALRSLD (397 aa)) form a carboxyphosphate synthetic domain region. ATP contacts are provided by Arg-127, Arg-167, Gly-173, Gly-174, Glu-206, Val-208, Glu-213, Gly-239, Ile-240, His-241, Gln-282, and Glu-294. One can recognise an ATP-grasp 1 domain in the interval 131 to 323 (RDLMNAIGEP…IARVAAKIAI (193 aa)). Mg(2+)-binding residues include Gln-282, Glu-294, and Asn-296. Mn(2+) contacts are provided by Gln-282, Glu-294, and Asn-296. Residues 398–530 (NDMQQHTNPS…YSTWEEGCEL (133 aa)) form an oligomerization domain region. The tract at residues 531–920 (VRDSAKKVLI…YKACTAADNT (390 aa)) is carbamoyl phosphate synthetic domain. The 192-residue stretch at 662 to 853 (SRLLTRLEIP…LAKIAAKVMV (192 aa)) folds into the ATP-grasp 2 domain. Residues Arg-698, Ser-737, Leu-739, Glu-744, Gly-769, Val-770, His-771, Ser-772, Gln-812, and Glu-824 each coordinate ATP. Mg(2+)-binding residues include Gln-812, Glu-824, and Asn-826. The Mn(2+) site is built by Gln-812, Glu-824, and Asn-826. Residues 919-1056 (NTLPTTGNVF…EPLGHYHGLM (138 aa)) enclose the MGS-like domain. Positions 921–1056 (LPTTGNVFIS…EPLGHYHGLM (136 aa)) are allosteric domain.

This sequence belongs to the CarB family. Composed of two chains; the small (or glutamine) chain promotes the hydrolysis of glutamine to ammonia, which is used by the large (or ammonia) chain to synthesize carbamoyl phosphate. Tetramer of heterodimers (alpha,beta)4. It depends on Mg(2+) as a cofactor. The cofactor is Mn(2+).

The enzyme catalyses hydrogencarbonate + L-glutamine + 2 ATP + H2O = carbamoyl phosphate + L-glutamate + 2 ADP + phosphate + 2 H(+). The catalysed reaction is hydrogencarbonate + NH4(+) + 2 ATP = carbamoyl phosphate + 2 ADP + phosphate + 2 H(+). It participates in amino-acid biosynthesis; L-arginine biosynthesis; carbamoyl phosphate from bicarbonate: step 1/1. The protein operates within pyrimidine metabolism; UMP biosynthesis via de novo pathway; (S)-dihydroorotate from bicarbonate: step 1/3. Large subunit of the glutamine-dependent carbamoyl phosphate synthetase (CPSase). CPSase catalyzes the formation of carbamoyl phosphate from the ammonia moiety of glutamine, carbonate, and phosphate donated by ATP, constituting the first step of 2 biosynthetic pathways, one leading to arginine and/or urea and the other to pyrimidine nucleotides. The large subunit (synthetase) binds the substrates ammonia (free or transferred from glutamine from the small subunit), hydrogencarbonate and ATP and carries out an ATP-coupled ligase reaction, activating hydrogencarbonate by forming carboxy phosphate which reacts with ammonia to form carbamoyl phosphate. This chain is Carbamoyl phosphate synthase large chain, found in Methanoculleus marisnigri (strain ATCC 35101 / DSM 1498 / JR1).